The following is a 284-amino-acid chain: Bifunctional protein FolD (284 aa).

Residues 166-168 (GAS) and isoleucine 232 contribute to the NADP(+) site.

It belongs to the tetrahydrofolate dehydrogenase/cyclohydrolase family. In terms of assembly, homodimer.

The enzyme catalyses (6R)-5,10-methylene-5,6,7,8-tetrahydrofolate + NADP(+) = (6R)-5,10-methenyltetrahydrofolate + NADPH. It carries out the reaction (6R)-5,10-methenyltetrahydrofolate + H2O = (6R)-10-formyltetrahydrofolate + H(+). It functions in the pathway one-carbon metabolism; tetrahydrofolate interconversion. Catalyzes the oxidation of 5,10-methylenetetrahydrofolate to 5,10-methenyltetrahydrofolate and then the hydrolysis of 5,10-methenyltetrahydrofolate to 10-formyltetrahydrofolate. The protein is Bifunctional protein FolD of Shewanella sediminis (strain HAW-EB3).